Consider the following 255-residue polypeptide: Ribose-5-phosphate isomerase (255 aa).

The protein belongs to the ribose 5-phosphate isomerase family.

It is found in the cytoplasm. The enzyme catalyses aldehydo-D-ribose 5-phosphate = D-ribulose 5-phosphate. Its pathway is carbohydrate degradation; pentose phosphate pathway; D-ribose 5-phosphate from D-ribulose 5-phosphate (non-oxidative stage): step 1/1. The chain is Ribose-5-phosphate isomerase (RKI1) from Eremothecium gossypii (strain ATCC 10895 / CBS 109.51 / FGSC 9923 / NRRL Y-1056) (Yeast).